The following is a 274-amino-acid chain: 3',5'-cyclic adenosine monophosphate phosphodiesterase CpdA (274 aa).

Residues aspartate 21, histidine 23, aspartate 63, asparagine 93, histidine 163, histidine 202, and histidine 204 each coordinate Fe cation. AMP contacts are provided by residues histidine 23, aspartate 63, and 93 to 94 (NH). Histidine 204 serves as a coordination point for AMP.

The protein belongs to the cyclic nucleotide phosphodiesterase class-III family. The cofactor is Fe(2+).

The catalysed reaction is 3',5'-cyclic AMP + H2O = AMP + H(+). In terms of biological role, hydrolyzes cAMP to 5'-AMP. Plays an important regulatory role in modulating the intracellular concentration of cAMP, thereby influencing cAMP-dependent processes. This Vibrio vulnificus (strain CMCP6) protein is 3',5'-cyclic adenosine monophosphate phosphodiesterase CpdA.